Consider the following 931-residue polypeptide: Phosphoenolpyruvate carboxylase (931 aa).

Active-site residues include H158 and K593.

It belongs to the PEPCase type 1 family. The cofactor is Mg(2+).

It carries out the reaction oxaloacetate + phosphate = phosphoenolpyruvate + hydrogencarbonate. Its function is as follows. Forms oxaloacetate, a four-carbon dicarboxylic acid source for the tricarboxylic acid cycle. The sequence is that of Phosphoenolpyruvate carboxylase from Azorhizobium caulinodans (strain ATCC 43989 / DSM 5975 / JCM 20966 / LMG 6465 / NBRC 14845 / NCIMB 13405 / ORS 571).